The sequence spans 931 residues: Protocadherin gamma-A5 (931 aa).

Positions 1-29 (MASPPRGWGCGELLLPFMLLGTLCEPGSG) are cleaved as a signal peptide. 6 consecutive Cadherin domains span residues 30–133 (QIRY…FPRF), 134–242 (RDEE…APLF), 243–347 (TPSE…APEV), 348–452 (ILTS…PPNF), 453–562 (PQAS…TPEI), and 570–683 (DGST…TPID). Over 30–692 (QIRYSMPEEL…DPEDLDLTLY (663 aa)) the chain is Extracellular. N-linked (GlcNAc...) asparagine glycosylation is found at N419 and N545. A helical transmembrane segment spans residues 693–713 (LVVAVAAVSCVFLAFVIVLLV). Topologically, residues 714 to 931 (LRLRRWHKSR…KKKSGKKEKK (218 aa)) are cytoplasmic. Disordered stretches follow at residues 800 to 840 (NKEE…WPNN) and 901 to 931 (ATLTNAAGKRDGKAPAGGNGNKKKSGKKEKK). The span at 809–840 (APPNTDWRFSQAQRPGTSGSQNGDDTGTWPNN) shows a compositional bias: polar residues. Over residues 921 to 931 (NKKKSGKKEKK) the composition is skewed to basic residues.

It is found in the cell membrane. Its function is as follows. Potential calcium-dependent cell-adhesion protein. May be involved in the establishment and maintenance of specific neuronal connections in the brain. The protein is Protocadherin gamma-A5 (PCDHGA5) of Homo sapiens (Human).